Here is a 647-residue protein sequence, read N- to C-terminus: Exoribonuclease 2 (647 aa).

One can recognise an RNB domain in the interval 192–519; that stretch reads RIDLTSLDFV…NHRLLKAIIQ (328 aa). Residues 564–646 enclose the S1 motif domain; that stretch reads EQRFTAEIID…ETRNIVARPT (83 aa).

Belongs to the RNR ribonuclease family. RNase II subfamily.

It is found in the cytoplasm. It carries out the reaction Exonucleolytic cleavage in the 3'- to 5'-direction to yield nucleoside 5'-phosphates.. Its function is as follows. Involved in mRNA degradation. Hydrolyzes single-stranded polyribonucleotides processively in the 3' to 5' direction. This is Exoribonuclease 2 from Photorhabdus laumondii subsp. laumondii (strain DSM 15139 / CIP 105565 / TT01) (Photorhabdus luminescens subsp. laumondii).